Here is a 303-residue protein sequence, read N- to C-terminus: Porphobilinogen deaminase (303 aa).

Cys-241 carries the S-(dipyrrolylmethanemethyl)cysteine modification.

This sequence belongs to the HMBS family. As to quaternary structure, monomer. Dipyrromethane is required as a cofactor.

It carries out the reaction 4 porphobilinogen + H2O = hydroxymethylbilane + 4 NH4(+). It participates in porphyrin-containing compound metabolism; protoporphyrin-IX biosynthesis; coproporphyrinogen-III from 5-aminolevulinate: step 2/4. The protein operates within porphyrin-containing compound metabolism; chlorophyll biosynthesis. Tetrapolymerization of the monopyrrole PBG into the hydroxymethylbilane pre-uroporphyrinogen in several discrete steps. The sequence is that of Porphobilinogen deaminase from Roseiflexus castenholzii (strain DSM 13941 / HLO8).